Reading from the N-terminus, the 2083-residue chain is Centriole proteome protein 16 (2083 aa).

Residues 205–333 are disordered; the sequence is DAPTMDFMPP…PAVPPPLSPS (129 aa). Low complexity predominate over residues 227-245; sequence TAETADTAGAAGRKSLSGA. A compositionally biased stretch (gly residues) spans 246 to 258; that stretch reads SAGGAGPAKGGAK. Low complexity-rich tracts occupy residues 259–274 and 283–292; these read AGAA…SAGA and GSTAGAATPG. The span at 302–315 shows a compositional bias: acidic residues; it reads GEEDFEDDLSEDLD. A compositionally biased stretch (pro residues) spans 319–331; it reads PLPPSPAVPPPLS. 10 WD repeats span residues 482 to 523, 526 to 569, 579 to 620, 689 to 726, 728 to 767, 770 to 809, 812 to 853, 856 to 895, 990 to 1029, and 1041 to 1079; these read GHTA…CLAI, AHAS…AAGG, ATEY…GTSV, LHAA…YLLE, EHEG…YTTL, SHCG…QLYE, APGE…LLQE, QHRA…APAQ, VSPL…ALRG, and GHPS…MQQE. Disordered regions lie at residues 1113–1141 and 1225–1276; these read HTQA…VASA and ALVV…PPPP. Pro residues predominate over residues 1263-1276; sequence VPLPPSPQPLPPPP. WD repeat units follow at residues 1326 to 1365, 1403 to 1444, 1448 to 1486, 1497 to 1539, 1651 to 1691, 1736 to 1781, and 1785 to 1824; these read GHNR…RAAQ, YHPL…LVAA, EQSP…LEQR, RDPR…QPPQ, GQAA…AEPA, DPLD…QLSW, and RHPA…LVSY. The disordered stretch occupies residues 1713–1743; sequence APAHTLRHPPSAAPSSAASSSPLDPLDPLPA. Residues 1720-1743 are compositionally biased toward low complexity; it reads HPPSAAPSSAASSSPLDPLDPLPA. Residues 1832–1870 form a disordered region; that stretch reads GPTPHSPGGTGRRSPRGAASPPPAPPRPGTGPLQAMAVS. Residues 1851-1860 show a composition bias toward pro residues; sequence SPPPAPPRPG. Residues 2035–2073 form a WD 18 repeat; the sequence is GHAGAVAAASYTGDGGHAVTASGSVLMVWDAAQLLKGVT.

It belongs to the WD repeat WDR90/POC16 family.

It localises to the cytoplasm. The protein resides in the cytoskeleton. The protein localises to the microtubule organizing center. It is found in the centrosome. Its subcellular location is the centriole. In terms of biological role, required for flagellum assembly and/or maintenance. This chain is Centriole proteome protein 16, found in Chlamydomonas reinhardtii (Chlamydomonas smithii).